We begin with the raw amino-acid sequence, 235 residues long: RNA polymerase sigma factor SigI7 (235 aa).

Positions D49–I62 match the Polymerase core binding motif. The segment at residues V191–K210 is a DNA-binding region (H-T-H motif).

It belongs to the sigma-70 factor family. SigI subfamily. In terms of assembly, interacts with RsgI7.

Its subcellular location is the cytoplasm. Negatively regulated by the anti-sigma-I factor RsgI7. Functionally, sigma factors are initiation factors that promote the attachment of RNA polymerase to specific initiation sites and are then released. The polypeptide is RNA polymerase sigma factor SigI7 (Acetivibrio thermocellus (strain ATCC 27405 / DSM 1237 / JCM 9322 / NBRC 103400 / NCIMB 10682 / NRRL B-4536 / VPI 7372) (Clostridium thermocellum)).